Consider the following 173-residue polypeptide: T cell receptor gamma constant 1 (173 aa).

An Ig-like domain is found at 10 to 104; that stretch reads PKPTIFLPSI…NKNGVDQEII (95 aa). Cys32 and Cys88 are joined by a disulfide. N-linked (GlcNAc...) asparagine glycosylation is found at Asn66, Asn120, Asn126, and Asn135. Residues 139–161 traverse the membrane as a helical segment; that stretch reads YYMYLLLLLKSVVYFAIITCCLL.

As to quaternary structure, gamma-delta TR is a heterodimer composed of a gamma and delta chain; disulfide-linked. The gamma-delta TR is associated with the transmembrane signaling CD3 coreceptor proteins following the stoichiometry: a single gamma-delta TR heterodimer associates with one CD3D-CD3E heterodimer, one CD3G-CD3E heterodimer and one CD247 homodimer forming a stable octameric structure. Upon activation, gamma-delta TR complex associates with FCER1G to initiate intracellular signaling.

It localises to the cell membrane. Constant region of T cell receptor (TR) gamma chain that participates in the antigen recognition. Gamma-delta TRs recognize a variety of self and foreign non-peptide antigens frequently expressed at the epithelial boundaries between the host and external environment, including endogenous lipids presented by MH-like protein CD1D and phosphoantigens presented by butyrophilin-like molecule BTN3A1. Upon antigen recognition induces rapid, innate-like immune responses involved in pathogen clearance and tissue repair. Binding of gamma-delta TR complex to antigen triggers phosphorylation of immunoreceptor tyrosine-based activation motifs (ITAMs) in the CD3 chains by the LCK and FYN kinases, allowing the recruitment, phosphorylation, and activation of ZAP70 that facilitates phosphorylation of the scaffolding proteins LCP2 and LAT. This lead to the formation of a supramolecular signalosome that recruits the phospholipase PLCG1, resulting in calcium mobilization and ERK activation, ultimately leading to T cell expansion and differentiation into effector cells. Gamma-delta TRs are produced through somatic rearrangement of a limited repertoire of variable (V), diversity (D), and joining (J) genes. The potential diversity of gamma-delta TRs is conferred by the unique ability to rearrange (D) genes in tandem and to utilize all three reading frames. The combinatorial diversity is considerably increased by the sequence exonuclease trimming and random nucleotide (N) region additions which occur during the V-(D)-J rearrangements. The protein is T cell receptor gamma constant 1 of Homo sapiens (Human).